The chain runs to 178 residues: Redox-sensing transcriptional repressor Rex (178 aa).

59 to 64 (GVGNMG) serves as a coordination point for NAD(+).

Belongs to the transcriptional regulatory Rex family. Homodimer.

Its subcellular location is the cytoplasm. Its function is as follows. Modulates transcription in response to changes in cellular NADH/NAD(+) redox state. The sequence is that of Redox-sensing transcriptional repressor Rex from Streptococcus suis.